Reading from the N-terminus, the 215-residue chain is Nucleoside triphosphate pyrophosphatase (215 aa).

Catalysis depends on Asp-77, which acts as the Proton acceptor.

This sequence belongs to the Maf family. It depends on a divalent metal cation as a cofactor.

The protein resides in the cytoplasm. It catalyses the reaction a ribonucleoside 5'-triphosphate + H2O = a ribonucleoside 5'-phosphate + diphosphate + H(+). The enzyme catalyses a 2'-deoxyribonucleoside 5'-triphosphate + H2O = a 2'-deoxyribonucleoside 5'-phosphate + diphosphate + H(+). Functionally, nucleoside triphosphate pyrophosphatase. May have a dual role in cell division arrest and in preventing the incorporation of modified nucleotides into cellular nucleic acids. The sequence is that of Nucleoside triphosphate pyrophosphatase from Rickettsia peacockii (strain Rustic).